Consider the following 177-residue polypeptide: ATP synthase subunit delta (177 aa).

The protein belongs to the ATPase delta chain family. F-type ATPases have 2 components, F(1) - the catalytic core - and F(0) - the membrane proton channel. F(1) has five subunits: alpha(3), beta(3), gamma(1), delta(1), epsilon(1). F(0) has three main subunits: a(1), b(2) and c(10-14). The alpha and beta chains form an alternating ring which encloses part of the gamma chain. F(1) is attached to F(0) by a central stalk formed by the gamma and epsilon chains, while a peripheral stalk is formed by the delta and b chains.

The protein resides in the cell inner membrane. F(1)F(0) ATP synthase produces ATP from ADP in the presence of a proton or sodium gradient. F-type ATPases consist of two structural domains, F(1) containing the extramembraneous catalytic core and F(0) containing the membrane proton channel, linked together by a central stalk and a peripheral stalk. During catalysis, ATP synthesis in the catalytic domain of F(1) is coupled via a rotary mechanism of the central stalk subunits to proton translocation. In terms of biological role, this protein is part of the stalk that links CF(0) to CF(1). It either transmits conformational changes from CF(0) to CF(1) or is implicated in proton conduction. This is ATP synthase subunit delta from Sodalis glossinidius (strain morsitans).